Reading from the N-terminus, the 388-residue chain is Protein-glutamate methylesterase/protein-glutamine glutaminase 1 (388 aa).

The 118-residue stretch at 4–121 folds into the Response regulatory domain; that stretch reads QVLVVDDSSF…ATNKDEAIRL (118 aa). The residue at position 55 (Asp55) is a 4-aspartylphosphate. The disordered stretch occupies residues 149–190; the sequence is SARAGLSSTSPTLGSSTLGRSPASGLASSASRNSPTVSTPAS. A compositionally biased stretch (low complexity) spans 153-169; it reads GLSSTSPTLGSSTLGRS. The segment covering 174–189 has biased composition (polar residues); sequence LASSASRNSPTVSTPA. Residues 188–388 form the CheB-type methylesterase domain; it reads PASAIRASGK…EAILKESGRG (201 aa). Active-site residues include Ser207, His234, and Asp330.

The protein belongs to the CheB family. Phosphorylated by CheA. Phosphorylation of the N-terminal regulatory domain activates the methylesterase activity.

Its subcellular location is the cytoplasm. It catalyses the reaction [protein]-L-glutamate 5-O-methyl ester + H2O = L-glutamyl-[protein] + methanol + H(+). The enzyme catalyses L-glutaminyl-[protein] + H2O = L-glutamyl-[protein] + NH4(+). Its function is as follows. Involved in chemotaxis. Part of a chemotaxis signal transduction system that modulates chemotaxis in response to various stimuli. Catalyzes the demethylation of specific methylglutamate residues introduced into the chemoreceptors (methyl-accepting chemotaxis proteins or MCP) by CheR. Also mediates the irreversible deamidation of specific glutamine residues to glutamic acid. The sequence is that of Protein-glutamate methylesterase/protein-glutamine glutaminase 1 from Shewanella denitrificans (strain OS217 / ATCC BAA-1090 / DSM 15013).